The primary structure comprises 91 residues: Large ribosomal subunit protein uL23c (91 aa).

This sequence belongs to the universal ribosomal protein uL23 family. In terms of assembly, part of the 50S ribosomal subunit.

It localises to the plastid. The protein resides in the chloroplast. Binds to 23S rRNA. The protein is Large ribosomal subunit protein uL23c (rpl23) of Pinus koraiensis (Korean pine).